The following is a 272-amino-acid chain: MLRVAGRRLFSVSQRSSTATSFVVSRDHTLSDGGGDSSSAPRSLPSADLSSYHRSLIRGFSSQVLAQGNEIGFGSEVPATVEAVKTPNSKIVYDDHNHERYPPGDPSKRAFAYFVLSGGRFVYASVLRLLVLKLIVSMSASKDVLALASLEVDLGSIEPGTTVTVKWRGKPVFIRRRTEDDIKLANSVDVGSLRDPQEDSVRVKNPEWLVVVGVCTHLGCIPLPNAGDYGGWFCPCHGSHYDISGRIRKGPAPYNLEVPTYSFLEENKLLIG.

The transit peptide at M1 to F60 directs the protein to the mitochondrion. Residues D27–S46 are disordered. The Mitochondrial matrix segment spans residues S61–R109. A helical membrane pass occupies residues A110–L132. Residues K133–G272 are Mitochondrial intermembrane-facing. One can recognise a Rieske domain in the interval V201–L270. 4 residues coordinate [2Fe-2S] cluster: C215, H217, C234, and H237. C220 and C236 are disulfide-bonded.

The protein belongs to the Rieske iron-sulfur protein family. As to quaternary structure, component of the ubiquinol-cytochrome c oxidoreductase (cytochrome b-c1 complex, complex III, CIII), a multisubunit enzyme composed of 10 subunits. The complex is composed of 3 respiratory subunits cytochrome b (MT-CYB), cytochrome c1 (CYC1-1 or CYC1-2) and Rieske protein (UCR1-1 or UCR1-2), 2 core protein subunits MPPalpha1 (or MPPalpha2) and MPPB, and 5 low-molecular weight protein subunits QCR7-1 (or QCR7-2), UCRQ-1 (or UCRQ-2), QCR9, UCRY and probably QCR6-1 (or QCR6-2). The complex exists as an obligatory dimer and forms supercomplexes (SCs) in the inner mitochondrial membrane with NADH-ubiquinone oxidoreductase (complex I, CI), resulting in different assemblies (supercomplexes SCI(1)III(2) and SCI(2)III(4)). The cofactor is [2Fe-2S] cluster.

The protein localises to the mitochondrion inner membrane. It carries out the reaction a quinol + 2 Fe(III)-[cytochrome c](out) = a quinone + 2 Fe(II)-[cytochrome c](out) + 2 H(+)(out). In terms of biological role, component of the ubiquinol-cytochrome c oxidoreductase, a multisubunit transmembrane complex that is part of the mitochondrial electron transport chain which drives oxidative phosphorylation. The respiratory chain contains 3 multisubunit complexes succinate dehydrogenase (complex II, CII), ubiquinol-cytochrome c oxidoreductase (cytochrome b-c1 complex, complex III, CIII) and cytochrome c oxidase (complex IV, CIV), that cooperate to transfer electrons derived from NADH and succinate to molecular oxygen, creating an electrochemical gradient over the inner membrane that drives transmembrane transport and the ATP synthase. The cytochrome b-c1 complex catalyzes electron transfer from ubiquinol to cytochrome c, linking this redox reaction to translocation of protons across the mitochondrial inner membrane, with protons being carried across the membrane as hydrogens on the quinol. In the process called Q cycle, 2 protons are consumed from the matrix, 4 protons are released into the intermembrane space and 2 electrons are passed to cytochrome c. The Rieske protein is a catalytic core subunit containing a [2Fe-2S] iron-sulfur cluster. It cycles between 2 conformational states during catalysis to transfer electrons from the quinol bound in the Q(0) site in cytochrome b to cytochrome c1. This chain is Cytochrome b-c1 complex subunit Rieske-1, mitochondrial, found in Arabidopsis thaliana (Mouse-ear cress).